The chain runs to 249 residues: INO80 complex subunit 1 (249 aa).

2 consecutive C2H2-type zinc fingers follow at residues 73 to 100 (YTCEWDDCPRKGMVQTSRFALVAHLRSH) and 106 to 131 (FICSVPECDRSFTRSDALAKHMRTVH).

In terms of assembly, component of the INO80 chromatin remodeling complex.

It localises to the nucleus. Its subcellular location is the cytoplasm. In terms of biological role, component of the INO80 complex which remodels chromatin by shifting nucleosomes and is involved in DNA repair. This is INO80 complex subunit 1 (iec1) from Schizosaccharomyces pombe (strain 972 / ATCC 24843) (Fission yeast).